The chain runs to 110 residues: Protein YcgL (110 aa).

Residues 14–98 (MFCVIYRSSK…PPEDLLKQHL (85 aa)) enclose the YcgL domain. The tract at residues 88–110 (PPPEDLLKQHLSSVGQNTSPADR) is disordered. Residues 97–110 (HLSSVGQNTSPADR) show a composition bias toward polar residues.

This is Protein YcgL from Salmonella paratyphi A (strain ATCC 9150 / SARB42).